Reading from the N-terminus, the 743-residue chain is 1,4-alpha-glucan branching enzyme GlgB (743 aa).

The Nucleophile role is filled by D416. Catalysis depends on E469, which acts as the Proton donor.

Belongs to the glycosyl hydrolase 13 family. GlgB subfamily. As to quaternary structure, monomer.

It catalyses the reaction Transfers a segment of a (1-&gt;4)-alpha-D-glucan chain to a primary hydroxy group in a similar glucan chain.. It participates in glycan biosynthesis; glycogen biosynthesis. Functionally, catalyzes the formation of the alpha-1,6-glucosidic linkages in glycogen by scission of a 1,4-alpha-linked oligosaccharide from growing alpha-1,4-glucan chains and the subsequent attachment of the oligosaccharide to the alpha-1,6 position. This chain is 1,4-alpha-glucan branching enzyme GlgB, found in Shewanella baltica (strain OS185).